The chain runs to 397 residues: Acetate kinase 1 (397 aa).

Asn8 serves as a coordination point for Mg(2+). Residue Lys15 participates in ATP binding. Substrate is bound at residue Arg89. Asp146 acts as the Proton donor/acceptor in catalysis. Residues 206–210 (HLGNG), 281–283 (DFR), and 329–333 (GVGEN) each bind ATP. Position 380 (Glu380) interacts with Mg(2+).

This sequence belongs to the acetokinase family. Homodimer. Requires Mg(2+) as cofactor. The cofactor is Mn(2+).

Its subcellular location is the cytoplasm. It catalyses the reaction acetate + ATP = acetyl phosphate + ADP. Its pathway is metabolic intermediate biosynthesis; acetyl-CoA biosynthesis; acetyl-CoA from acetate: step 1/2. Functionally, catalyzes the formation of acetyl phosphate from acetate and ATP. Can also catalyze the reverse reaction. This is Acetate kinase 1 from Listeria monocytogenes serotype 4b (strain F2365).